The primary structure comprises 264 residues: Small ribosomal subunit protein eS1B (264 aa).

Positions 1-19 are enriched in basic residues; that stretch reads MALGKNKRISKGGKRGKRG. The tract at residues 1-23 is disordered; that stretch reads MALGKNKRISKGGKRGKRGKAQE.

This sequence belongs to the eukaryotic ribosomal protein eS1 family. Component of the small ribosomal subunit. Mature ribosomes consist of a small (40S) and a large (60S) subunit. The 40S subunit contains about 33 different proteins and 1 molecule of RNA (18S). The 60S subunit contains about 49 different proteins and 3 molecules of RNA (25S, 5.8S and 5S).

The protein localises to the cytoplasm. The sequence is that of Small ribosomal subunit protein eS1B from Leishmania infantum.